The chain runs to 391 residues: Phosphoglycerate kinase (391 aa).

Substrate is bound by residues 21–23, Arg36, 59–62, Arg113, and Arg146; these read DLN and HLGR. Residues Lys197, Glu319, and 345 to 348 each bind ATP; that span reads GGDT.

This sequence belongs to the phosphoglycerate kinase family. As to quaternary structure, monomer.

Its subcellular location is the cytoplasm. The enzyme catalyses (2R)-3-phosphoglycerate + ATP = (2R)-3-phospho-glyceroyl phosphate + ADP. Its pathway is carbohydrate degradation; glycolysis; pyruvate from D-glyceraldehyde 3-phosphate: step 2/5. In Shewanella baltica (strain OS195), this protein is Phosphoglycerate kinase.